The chain runs to 475 residues: Cytosolic non-specific dipeptidase (475 aa).

K9 is subject to N6-acetyllysine. S58 bears the Phosphoserine mark. H99 provides a ligand contact to Mn(2+). D101 is a catalytic residue. Residue D132 coordinates Mn(2+). Catalysis depends on E166, which acts as the Proton acceptor. Substrate is bound by residues E166–E167, D195, H228, T330, R343, S417, and H445. Residues E167 and D195 each contribute to the Mn(2+) site. H445 contacts Mn(2+).

The protein belongs to the peptidase M20A family. Homodimer. Requires Mn(2+) as cofactor.

The protein resides in the cytoplasm. The catalysed reaction is Hydrolysis of dipeptides, preferentially hydrophobic dipeptides including prolyl amino acids.. It catalyses the reaction L-threonyl-L-threonine + H2O = 2 L-threonine. It carries out the reaction L-threonyl-L-serine + H2O = L-threonine + L-serine. The enzyme catalyses L-seryl-L-threonine + H2O = L-threonine + L-serine. The catalysed reaction is L-cysteinylglycine + H2O = L-cysteine + glycine. It catalyses the reaction L-alanyl-L-cysteine + H2O = L-cysteine + L-alanine. It carries out the reaction (S)-lactate + L-phenylalanine = N-[(S)-lactoyl]-L-phenylalanine + H2O. Its function is as follows. Catalyzes the peptide bond hydrolysis in dipeptides, displaying a non-redundant activity toward threonyl dipeptides. Mediates threonyl dipeptide catabolism in a tissue-specific way. Has high dipeptidase activity toward cysteinylglycine, an intermediate metabolite in glutathione metabolism. Metabolizes N-lactoyl-amino acids, both through hydrolysis to form lactic acid and amino acids, as well as through their formation by reverse proteolysis. Plays a role in the regulation of cell cycle arrest and apoptosis. The polypeptide is Cytosolic non-specific dipeptidase (CNDP2) (Bos taurus (Bovine)).